Consider the following 650-residue polypeptide: Fructose-1,6-bisphosphatase class 3 (650 aa).

The protein belongs to the FBPase class 3 family. Mn(2+) is required as a cofactor.

It carries out the reaction beta-D-fructose 1,6-bisphosphate + H2O = beta-D-fructose 6-phosphate + phosphate. It participates in carbohydrate biosynthesis; gluconeogenesis. The protein is Fructose-1,6-bisphosphatase class 3 of Finegoldia magna (strain ATCC 29328 / DSM 20472 / WAL 2508) (Peptostreptococcus magnus).